The following is a 401-amino-acid chain: Cartilage-associated protein (401 aa).

An N-terminal signal peptide occupies residues 1–26 (MEPGRRGAAALLALLCVACALRAGRA). N87 and N363 each carry an N-linked (GlcNAc...) asparagine glycan.

It belongs to the leprecan family. In terms of tissue distribution, found in articular chondrocytes. Expressed in a variety of tissues.

Its subcellular location is the secreted. It is found in the extracellular space. The protein localises to the extracellular matrix. Functionally, necessary for efficient 3-hydroxylation of fibrillar collagen prolyl residues. The polypeptide is Cartilage-associated protein (CRTAP) (Homo sapiens (Human)).